A 144-amino-acid chain; its full sequence is Large ribosomal subunit protein uL13 (144 aa).

It belongs to the universal ribosomal protein uL13 family. As to quaternary structure, part of the 50S ribosomal subunit.

Functionally, this protein is one of the early assembly proteins of the 50S ribosomal subunit, although it is not seen to bind rRNA by itself. It is important during the early stages of 50S assembly. This chain is Large ribosomal subunit protein uL13, found in Clostridium novyi (strain NT).